Consider the following 474-residue polypeptide: Aromatic amino acid aminotransferase C56E4.03 (474 aa).

This sequence belongs to the class-I pyridoxal-phosphate-dependent aminotransferase family. Pyridoxal 5'-phosphate is required as a cofactor.

Its subcellular location is the cytoplasm. It catalyses the reaction an aromatic L-alpha-amino acid + 2-oxoglutarate = an aromatic oxo-acid + L-glutamate. Functionally, has aromatic amino acid transaminase activity. The chain is Aromatic amino acid aminotransferase C56E4.03 from Schizosaccharomyces pombe (strain 972 / ATCC 24843) (Fission yeast).